We begin with the raw amino-acid sequence, 403 residues long: D-mannonate dehydratase (403 aa).

2 residues coordinate substrate: Asn38 and His123. The active-site Proton donor/acceptor is Tyr160. Asp211 contacts Mg(2+). His213 (proton donor/acceptor) is an active-site residue. Residues Glu237 and Glu263 each contribute to the Mg(2+) site. Positions 263, 284, 313, 317, and 340 each coordinate substrate.

It belongs to the mandelate racemase/muconate lactonizing enzyme family. GalD subfamily. It depends on Mg(2+) as a cofactor.

The catalysed reaction is D-mannonate = 2-dehydro-3-deoxy-D-gluconate + H2O. It participates in carbohydrate metabolism; pentose and glucuronate interconversion. Functionally, catalyzes the dehydration of D-mannonate. Has no detectable activity with a panel of 70 other acid sugars (in vitro). The polypeptide is D-mannonate dehydratase (Sphingomonas sp. (strain SKA58)).